The sequence spans 579 residues: uncharacterized protein (579 aa).

A run of 11 helical transmembrane segments spans residues 13–35, 39–61, 66–83, 93–110, 130–152, 162–181, 201–223, 238–257, 264–286, 296–315, and 324–346; these read DLIK…IPWI, SISR…LLLN, ANGL…AFYF, AYWG…TYPL, LAIV…IEYL, IVPK…FFLI, LIVN…LYLA, YIIM…RLLL, GFYR…GIHT, IRVM…LFSM, and LFSL…YYLA.

It localises to the cell membrane. This is an uncharacterized protein from Pasteurella multocida (strain Pm70).